The chain runs to 590 residues: Muscarinic acetylcholine receptor M3 (590 aa).

The Extracellular segment spans residues 1–67; sequence MTLHNNSTTS…DPLGGHTVWQ (67 aa). N-linked (GlcNAc...) asparagine glycosylation is found at asparagine 5, asparagine 6, asparagine 15, asparagine 41, and asparagine 48. A helical transmembrane segment spans residues 68–91; sequence VVFIAFLTGILALVTIIGNILVIV. Residues 92–104 are Cytoplasmic-facing; sequence SFKVNKQLKTVNN. Residues 105–130 traverse the membrane as a helical segment; that stretch reads YFLLSLACADLIIGVISMNLFTTYII. The Extracellular segment spans residues 131–142; it reads MNRWALGNLACD. A disulfide bridge connects residues cysteine 141 and cysteine 221. A helical transmembrane segment spans residues 143–164; that stretch reads LWLAIDYVASNASVMNLLVISF. The Cytoplasmic portion of the chain corresponds to 165 to 184; it reads DRYFSITRPLTYRAKRTTKR. The chain crosses the membrane as a helical span at residues 185-206; that stretch reads AGVMIGLAWVISFVLWAPAILF. Over 207-229 the chain is Extracellular; that stretch reads WQYFVGKRTVPPGECFIQFLSEP. A helical transmembrane segment spans residues 230 to 252; it reads TITFGTAIAAFYMPVTIMTILYW. The Cytoplasmic portion of the chain corresponds to 253 to 491; the sequence is RIYKETEKRT…SLVKEKKAAQ (239 aa). The Basolateral sorting signal motif lies at 275–281; the sequence is AETENFV. The interval 323–357 is disordered; the sequence is SSEQMDQDHSSSDSWNNNDAAASLENSASSDEEDI. Residues 334–345 show a composition bias toward low complexity; the sequence is SDSWNNNDAAAS. Serine 385 is subject to Phosphoserine. Residues 492-514 traverse the membrane as a helical segment; it reads TLSAILLAFIITWTPYNIMVLVN. Residues 515–526 are Extracellular-facing; that stretch reads TFCDSCIPKTFW. Cysteine 517 and cysteine 520 form a disulfide bridge. The chain crosses the membrane as a helical span at residues 527-546; it reads NLGYWLCYINSTVNPVCYAL. Residues 547–590 lie on the Cytoplasmic side of the membrane; it reads CNKTFRTTFKMLLLCQCGKKKRRKQQYQQRQSVIFHKRAPEQAL.

This sequence belongs to the G-protein coupled receptor 1 family. Muscarinic acetylcholine receptor subfamily. CHRM3 sub-subfamily. As to quaternary structure, homodimer; the dimers can form tetramers. Interacts with NALCN. Interacts with TMEM147.

The protein localises to the cell membrane. Its subcellular location is the postsynaptic cell membrane. It is found in the basolateral cell membrane. The protein resides in the endoplasmic reticulum membrane. Its function is as follows. The muscarinic acetylcholine receptor mediates various cellular responses, including inhibition of adenylate cyclase, breakdown of phosphoinositides and modulation of potassium channels through the action of G proteins. Primary transducing effect is Pi turnover. This is Muscarinic acetylcholine receptor M3 (CHRM3) from Gorilla gorilla gorilla (Western lowland gorilla).